The sequence spans 437 residues: Asparagine--tRNA ligase (437 aa).

This sequence belongs to the class-II aminoacyl-tRNA synthetase family. As to quaternary structure, homodimer.

It localises to the cytoplasm. It catalyses the reaction tRNA(Asn) + L-asparagine + ATP = L-asparaginyl-tRNA(Asn) + AMP + diphosphate + H(+). The polypeptide is Asparagine--tRNA ligase (Symbiobacterium thermophilum (strain DSM 24528 / JCM 14929 / IAM 14863 / T)).